Here is a 419-residue protein sequence, read N- to C-terminus: UDP-N-acetylglucosamine 1-carboxyvinyltransferase (419 aa).

22–23 is a phosphoenolpyruvate binding site; the sequence is KN. UDP-N-acetyl-alpha-D-glucosamine is bound at residue R93. Catalysis depends on C117, which acts as the Proton donor. A 2-(S-cysteinyl)pyruvic acid O-phosphothioketal modification is found at C117. 2 residues coordinate UDP-N-acetyl-alpha-D-glucosamine: D307 and I329.

This sequence belongs to the EPSP synthase family. MurA subfamily.

It localises to the cytoplasm. The enzyme catalyses phosphoenolpyruvate + UDP-N-acetyl-alpha-D-glucosamine = UDP-N-acetyl-3-O-(1-carboxyvinyl)-alpha-D-glucosamine + phosphate. Its pathway is cell wall biogenesis; peptidoglycan biosynthesis. Functionally, cell wall formation. Adds enolpyruvyl to UDP-N-acetylglucosamine. In Shewanella frigidimarina (strain NCIMB 400), this protein is UDP-N-acetylglucosamine 1-carboxyvinyltransferase.